A 268-amino-acid chain; its full sequence is Undecaprenyl-diphosphatase (268 aa).

Helical transmembrane passes span phenylalanine 43–tyrosine 63, isoleucine 85–isoleucine 105, valine 108–tryptophan 128, alanine 141–valine 161, alanine 184–valine 204, phenylalanine 217–phenylalanine 237, and phenylalanine 246–leucine 266.

This sequence belongs to the UppP family.

It is found in the cell inner membrane. The catalysed reaction is di-trans,octa-cis-undecaprenyl diphosphate + H2O = di-trans,octa-cis-undecaprenyl phosphate + phosphate + H(+). Functionally, catalyzes the dephosphorylation of undecaprenyl diphosphate (UPP). Confers resistance to bacitracin. This Afipia carboxidovorans (strain ATCC 49405 / DSM 1227 / KCTC 32145 / OM5) (Oligotropha carboxidovorans) protein is Undecaprenyl-diphosphatase.